Here is a 514-residue protein sequence, read N- to C-terminus: Cytochrome P450 94A1 (514 aa).

A helical transmembrane segment spans residues 7 to 29 (EVLLPYLLPLLLLILPTTIFFLT). A heme-binding site is contributed by cysteine 458.

Belongs to the cytochrome P450 family. Requires heme as cofactor.

Its subcellular location is the endoplasmic reticulum membrane. In terms of biological role, catalyzes the omega-hydroxylation of various fatty acids (FA) from 10 to 18 carbon atoms. The substrate specificity is higher for laurate &gt; palmitate &gt; myristate &gt; linolenate &gt; linoleate &gt; oleate &gt; caprate. May play a minor role in cutin synthesis and could be involved in plant defense. The sequence is that of Cytochrome P450 94A1 (CYP94A1) from Vicia sativa (Spring vetch).